A 322-amino-acid chain; its full sequence is Protein SEC13 homolog (322 aa).

Residue Val2 is modified to N-acetylvaline. 6 WD repeats span residues 11–50 (SHED…QILI), 55–96 (GHEG…WEKS), 101–144 (GHDS…EVKK), 148–204 (AHTI…QWKE), 210–253 (AHSD…SNTW), and 260–299 (KFND…QWVC). A Phosphoserine modification is found at Ser184. Residue Ser309 is modified to Phosphoserine.

It belongs to the WD repeat SEC13 family. In terms of assembly, at the nuclear pore: component of the Y-shaped Nup107-160 subcomplex of the nuclear pore complex (NPC). The Nup107-160 subcomplex includes NUP160, NUP133, NUP107, NUP98, NUP85, NUP43, NUP37, SEH1 and SEC13. At the COPII coat complex: interacts with SEC31A and SEC31B. Interacts with SEC16A. Interacts with SEC16B. Component of the GATOR2 subcomplex, composed of MIOS, SEC13, SEH1L, WDR24 and WDR59. The GATOR2 complex interacts with CASTOR1 and CASTOR2; the interaction is negatively regulated by arginine. The GATOR2 complex interacts with SESN1, SESN2 and SESN3; the interaction is negatively regulated by amino acids.

It localises to the cytoplasmic vesicle. Its subcellular location is the COPII-coated vesicle membrane. The protein resides in the endoplasmic reticulum membrane. The protein localises to the nucleus. It is found in the nuclear pore complex. It localises to the lysosome membrane. With respect to regulation, the GATOR2 complex is negatively regulated by the upstream amino acid sensors CASTOR1 and SESN2, which sequester the GATOR2 complex in absence of amino acids. In the presence of abundant amino acids, GATOR2 is released from CASTOR1 and SESN2 and activated. In terms of biological role, functions as a component of the nuclear pore complex (NPC) and the COPII coat. At the endoplasmic reticulum, SEC13 is involved in the biogenesis of COPII-coated vesicles. Required for the exit of adipsin (CFD/ADN), an adipocyte-secreted protein from the endoplasmic reticulum. Its function is as follows. As a component of the GATOR2 complex, functions as an activator of the amino acid-sensing branch of the mTORC1 signaling pathway. The GATOR2 complex indirectly activates mTORC1 through the inhibition of the GATOR1 subcomplex. GATOR2 probably acts as an E3 ubiquitin-protein ligase toward GATOR1. In the presence of abundant amino acids, the GATOR2 complex mediates ubiquitination of the NPRL2 core component of the GATOR1 complex, leading to GATOR1 inactivation. In the absence of amino acids, GATOR2 is inhibited, activating the GATOR1 complex. Within the GATOR2 complex, SEC13 and SEH1L are required to stabilize the complex. In Homo sapiens (Human), this protein is Protein SEC13 homolog.